Consider the following 331-residue polypeptide: Beta-ketoacyl-[acyl-carrier-protein] synthase III (331 aa).

Residues C113 and H256 contribute to the active site. The interval Q257–R261 is ACP-binding. The active site involves N286.

Belongs to the thiolase-like superfamily. FabH family. Homodimer.

The protein resides in the cytoplasm. The catalysed reaction is malonyl-[ACP] + acetyl-CoA + H(+) = 3-oxobutanoyl-[ACP] + CO2 + CoA. The protein operates within lipid metabolism; fatty acid biosynthesis. Functionally, catalyzes the condensation reaction of fatty acid synthesis by the addition to an acyl acceptor of two carbons from malonyl-ACP. Catalyzes the first condensation reaction which initiates fatty acid synthesis and may therefore play a role in governing the total rate of fatty acid production. Possesses both acetoacetyl-ACP synthase and acetyl transacylase activities. Its substrate specificity determines the biosynthesis of branched-chain and/or straight-chain of fatty acids. This chain is Beta-ketoacyl-[acyl-carrier-protein] synthase III, found in Solibacter usitatus (strain Ellin6076).